The chain runs to 389 residues: Lipid-A-disaccharide synthase (389 aa).

The protein belongs to the LpxB family.

The catalysed reaction is a lipid X + a UDP-2-N,3-O-bis[(3R)-3-hydroxyacyl]-alpha-D-glucosamine = a lipid A disaccharide + UDP + H(+). It participates in bacterial outer membrane biogenesis; LPS lipid A biosynthesis. Condensation of UDP-2,3-diacylglucosamine and 2,3-diacylglucosamine-1-phosphate to form lipid A disaccharide, a precursor of lipid A, a phosphorylated glycolipid that anchors the lipopolysaccharide to the outer membrane of the cell. The polypeptide is Lipid-A-disaccharide synthase (Burkholderia orbicola (strain MC0-3)).